Reading from the N-terminus, the 961-residue chain is FYVE, RhoGEF and PH domain-containing protein 1 (961 aa).

Over residues 1-11 the composition is skewed to gly residues; that stretch reads MHGHRAPGGAG. The interval 1-353 is disordered; the sequence is MHGHRAPGGA…DEEEEEEKDR (353 aa). Residues 27–38 are compositionally biased toward low complexity; it reads PPACADSDPGAS. Ser-48 is subject to Phosphoserine. Basic and acidic residues predominate over residues 125–135; that stretch reads PHPEGPQRLRS. 2 stretches are compositionally biased toward pro residues: residues 156–165 and 172–190; these read GPKPQVPPKP and RMPP…PLPA. The short motif at 171–187 is the SH3-binding element; sequence PRMPPPLEPIPPPPSRP. The segment covering 199-213 has biased composition (low complexity); the sequence is APRAEASPSSAAVSS. Residue Ser-205 is modified to Phosphoserine. A compositionally biased stretch (pro residues) spans 231-255; that stretch reads VPGPSPGPPEPVMLPQPTSQPPVPQ. Positions 273-284 are enriched in basic and acidic residues; it reads RDGEKVPNRDSG. Composition is skewed to low complexity over residues 285–294 and 316–325; these read IDSISSPSNS and ALASVPVALA. Over residues 335–351 the composition is skewed to acidic residues; that stretch reads VDSDLEEEDDEEEEEEK. The region spanning 373 to 561 is the DH domain; that stretch reads KVFHIANELL…ATAAEHSNAA (189 aa). Residues 590–689 enclose the PH 1 domain; that stretch reads ELIKEGHILK…WVQAINSTLL (100 aa). The interval 702 to 726 is disordered; sequence NSTNREDEDTPPNSPNVDLGKRAPT. Residue Thr-711 is modified to Phosphothreonine. Ser-715 bears the Phosphoserine mark. The FYVE-type zinc finger occupies 730–790; the sequence is EKEVTMCMRC…VCTDCYVALH (61 aa). Zn(2+) is bound by residues Cys-736, Cys-739, Cys-753, Cys-756, Cys-761, Cys-764, Cys-782, and Cys-785. The PH 2 domain occupies 821–921; the sequence is NSVICSFLHY…WMAVLGRAGR (101 aa). A disordered region spans residues 925-961; sequence FCPGPTLSEDREMEEAPVAALGATAEPPESPQTRDKT.

In terms of assembly, interacts with DBNL/ABP1 and CTTN. May interact with CCPG1. Binds CDC42. As to expression, expressed in fetal heart, brain, lung, kidney and placenta. Less expressed in liver; adult heart, brain, lung, pancreas and skeletal muscle.

The protein resides in the cytoplasm. It is found in the cell projection. It localises to the lamellipodium. The protein localises to the ruffle. Its subcellular location is the cytoskeleton. Its function is as follows. Activates CDC42, a member of the Ras-like family of Rho- and Rac proteins, by exchanging bound GDP for free GTP. Plays a role in regulating the actin cytoskeleton and cell shape. This Homo sapiens (Human) protein is FYVE, RhoGEF and PH domain-containing protein 1 (FGD1).